We begin with the raw amino-acid sequence, 206 residues long: Heat shock protein beta-1 (206 aa).

Omega-N-methylarginine is present on R12. Phosphoserine is present on S13. S15 is subject to Phosphoserine; by MAPKAPK2 and MAPKAPK3. S27 bears the Phosphoserine mark. Positions 74 to 206 (RPAFSRALNR…GPESEQSGAK (133 aa)) are interaction with TGFB1I1. One can recognise a sHSP domain in the interval 80–188 (ALNRQLSSGV…QSAEITIPVT (109 aa)). S86 carries the phosphoserine; by MAPKAPK2, MAPKAPK3 and MAPKAPK5 modification. Phosphoserine is present on residues S87, S90, and S102. K127 carries the post-translational modification N6-acetyllysine. T178 carries the phosphothreonine modification. Residues S180 and S200 each carry the phosphoserine modification.

The protein belongs to the small heat shock protein (HSP20) family. As to quaternary structure, homooligomer. Homodimer; becomes monomeric upon activation. Heterooligomer; with HSPB6. Associates with alpha- and beta-tubulin. Interacts with TGFB1I1. Interacts with CRYAB. Interacts with HSPB8. Interacts with HSPBAP1. Phosphorylated upon exposure to protein kinase C activators and heat shock. Phosphorylation by MAPKAPK2 and MAPKAPK3 in response to stress dissociates HSPB1 from large small heat-shock protein (sHsps) oligomers and impairs its chaperone activity and ability to protect against oxidative stress effectively. Phosphorylation by MAPKAPK5 in response to PKA stimulation induces F-actin rearrangement. As to expression, expressed in a variety of tissues. High levels in lung, adrenal, xiphoid, adipose tissue, heart and striated and smooth muscle, lower levels in the CNS. Adult levels are much higher in the slow-twitch soleus muscle than in the fast-twitch rectus femoris and extensor digitorum muscles.

It localises to the cytoplasm. The protein resides in the nucleus. Its subcellular location is the cytoskeleton. It is found in the spindle. In terms of biological role, small heat shock protein which functions as a molecular chaperone probably maintaining denatured proteins in a folding-competent state. Plays a role in stress resistance and actin organization. Through its molecular chaperone activity may regulate numerous biological processes including the phosphorylation and the axonal transport of neurofilament proteins. The protein is Heat shock protein beta-1 (Hspb1) of Rattus norvegicus (Rat).